The chain runs to 306 residues: uncharacterized protein (306 aa).

Catalysis depends on Y51, which acts as the Proton donor. Residue 197-207 coordinates NADP(+); that stretch reads GPVAKGLLTEK.

Belongs to the aldo/keto reductase family. Aldo/keto reductase 2 subfamily.

This is an uncharacterized protein from Bacillus subtilis (strain 168).